Here is a 137-residue protein sequence, read N- to C-terminus: Protein CTLA-2-alpha (137 aa).

The signal sequence occupies residues Met1–Ser27. A run of 2 repeats spans residues Glu39 to Lys41 and Glu42 to Lys44. Residues Glu39–Lys44 are 2 X 3 AA tandem repeats of E-W-K. Positions Ala114–Glu137 are disordered.

This sequence to the propeptide regions of cysteine proteases.

Its subcellular location is the secreted. Functionally, not known, expressed in activated T-cell. The protein is Protein CTLA-2-alpha (Ctla2a) of Mus musculus (Mouse).